A 176-amino-acid polypeptide reads, in one-letter code: Disulfide bond formation protein B (176 aa).

Over 1-14 the chain is Cytoplasmic; that stretch reads MMRSLNRCSKHRAA. Residues 15 to 31 traverse the membrane as a helical segment; it reads WLLLALTTFSLELVALY. The Periplasmic portion of the chain corresponds to 32 to 49; sequence FQHVMLLKPCVLCVYQRC. A disulfide bond links cysteine 41 and cysteine 44. The chain crosses the membrane as a helical span at residues 50–65; that stretch reads ALYGVVAAGLVGAIAP. Residues 66–71 are Cytoplasmic-facing; that stretch reads ATPLRF. Residues 72-89 form a helical membrane-spanning segment; sequence SGLAIWLYSAWEGLQLAM. Topologically, residues 90–144 are periplasmic; sequence KHTDIQLHPSPFVTCDFFVSFPAWLPLDKWLPSVFSASGDCAVRQWHFLSLEMPQ. A disulfide bridge connects residues cysteine 104 and cysteine 130. A helical transmembrane segment spans residues 145 to 163; the sequence is WMIVIFGAYLAVAVLILLA. The Cytoplasmic portion of the chain corresponds to 164 to 176; the sequence is QFFPPRKRDLFSR.

Belongs to the DsbB family.

The protein localises to the cell inner membrane. Its function is as follows. Required for disulfide bond formation in some periplasmic proteins. Acts by oxidizing the DsbA protein. This is Disulfide bond formation protein B from Sodalis glossinidius (strain morsitans).